Consider the following 258-residue polypeptide: SLA class II histocompatibility antigen, DQ haplotype D beta chain (258 aa).

An N-terminal signal peptide occupies residues 1–31 (MVALRLPRGLWTAALTVMLVVLGAPVAEGRD). The interval 32–123 (SPQDFVVQFK…IEEGTTLQRR (92 aa)) is beta-1. Residues 32-227 (SPQDFVVQFK…RAQSESAQSK (196 aa)) are Extracellular-facing. Disulfide bonds link Cys44/Cys108 and Cys146/Cys202. An N-linked (GlcNAc...) asparagine glycan is attached at Asn48. Positions 124–217 (VQPTVTISPS…SLQSPILVEW (94 aa)) are beta-2. The Ig-like C1-type domain maps to 126–230 (PTVTISPSKA…SESAQSKMLS (105 aa)). The segment at 218-227 (RAQSESAQSK) is connecting peptide. The helical transmembrane segment at 228 to 248 (MLSGVGGFVLGLIFLGLGLFI) threads the bilayer. At 249–258 (RHRSQKGLVR) the chain is on the cytoplasmic side.

This sequence belongs to the MHC class II family.

Its subcellular location is the membrane. This chain is SLA class II histocompatibility antigen, DQ haplotype D beta chain, found in Sus scrofa (Pig).